A 734-amino-acid polypeptide reads, in one-letter code: Polyphosphate kinase (734 aa).

An ATP-binding site is contributed by Asn-67. Mg(2+) contacts are provided by Arg-392 and Arg-422. Residues 447–481 (THLKTHSKIALVVKRINNELTSFVHLGTGNYNDKT) form the PLD phosphodiesterase domain. His-452 functions as the Phosphohistidine intermediate in the catalytic mechanism. ATP-binding residues include Tyr-485, Arg-581, and His-609. Positions 705-734 (KKQSVQPSGQPVHSRRGGSWMRKLKNTFKR) are disordered.

The protein belongs to the polyphosphate kinase 1 (PPK1) family. It depends on Mg(2+) as a cofactor. Post-translationally, an intermediate of this reaction is the autophosphorylated ppk in which a phosphate is covalently linked to a histidine residue through a N-P bond.

The enzyme catalyses [phosphate](n) + ATP = [phosphate](n+1) + ADP. In terms of biological role, catalyzes the reversible transfer of the terminal phosphate of ATP to form a long-chain polyphosphate (polyP). The polypeptide is Polyphosphate kinase (Staphylococcus epidermidis (strain ATCC 12228 / FDA PCI 1200)).